Reading from the N-terminus, the 274-residue chain is 2-amino-4,5-dihydroxy-6-oxo-7-(phosphonooxy)heptanoate synthase (274 aa).

This sequence belongs to the DeoC/FbaB aldolase family. GriI subfamily. Homodecamer.

The enzyme catalyses 2-amino-4,5-dihydroxy-6-oxo-7-(phosphooxy)heptanoate = L-aspartate 4-semialdehyde + dihydroxyacetone phosphate. Functionally, catalyzes aldol condensation between L-aspartate-4-semialdehyde (ASA) and dihydroxyacetone phosphate (DHAP), to form 2-amino-4,5-dihydroxy-6-oxo-7-(phosphonooxy)heptanoate. The sequence is that of 2-amino-4,5-dihydroxy-6-oxo-7-(phosphonooxy)heptanoate synthase (griI) from Streptomyces griseus subsp. griseus (strain JCM 4626 / CBS 651.72 / NBRC 13350 / KCC S-0626 / ISP 5235).